The primary structure comprises 149 residues: UPF0178 protein Sama_3557 (149 aa).

This sequence belongs to the UPF0178 family.

The protein is UPF0178 protein Sama_3557 of Shewanella amazonensis (strain ATCC BAA-1098 / SB2B).